The sequence spans 455 residues: Phosphoglucosamine mutase (455 aa).

Ser-102 (phosphoserine intermediate) is an active-site residue. Positions 102, 241, 243, and 245 each coordinate Mg(2+). Position 102 is a phosphoserine (Ser-102).

The protein belongs to the phosphohexose mutase family. Requires Mg(2+) as cofactor. In terms of processing, activated by phosphorylation.

It catalyses the reaction alpha-D-glucosamine 1-phosphate = D-glucosamine 6-phosphate. Its function is as follows. Catalyzes the conversion of glucosamine-6-phosphate to glucosamine-1-phosphate. This chain is Phosphoglucosamine mutase, found in Legionella pneumophila (strain Corby).